Consider the following 543-residue polypeptide: ADP,ATP carrier protein 3 (543 aa).

The next 10 membrane-spanning stretches (helical) occupy residues Val-46–Leu-66, Ile-86–Phe-106, Met-111–Trp-131, Phe-175–Phe-195, Ile-209–Val-229, Glu-243–Leu-263, Leu-306–Ala-326, Phe-346–Ile-366, Leu-382–Phe-402, and Ser-504–Leu-524.

The protein belongs to the ADP/ATP translocase tlc family.

The protein localises to the mitosome membrane. In terms of biological role, ATP transporter involved in the uptake of ATP from the parasite cell cytoplasm into the mitosome matrix. Equilibrates nucleotide pools across a concentration gradient between both sides of the mitosome membrane. In Encephalitozoon cuniculi (strain GB-M1) (Microsporidian parasite), this protein is ADP,ATP carrier protein 3 (NTT3).